Consider the following 105-residue polypeptide: ESCEYTCGSTCYWSSDVSAAKAKGYSLYESGDTIDDYPHGYHDYEGFDFPVSGTYYEYPIMSDYDVYTGGSPGADRVIFNGDDELAGVITHTGASGDDFVACSSS.

2 disulfide bridges follow: Cys-3–Cys-11 and Cys-7–Cys-102. His-39 is a catalytic residue. The active-site Proton acceptor is Glu-57. The active-site Proton donor is the His-91.

It belongs to the ribonuclease N1/T1 family.

It catalyses the reaction [RNA] containing guanosine + H2O = an [RNA fragment]-3'-guanosine-3'-phosphate + a 5'-hydroxy-ribonucleotide-3'-[RNA fragment].. In Aspergillus phoenicis (Aspergillus saitoi), this protein is Guanyl-specific ribonuclease Ms.